A 247-amino-acid chain; its full sequence is Chymase (247 aa).

The signal sequence occupies residues 1-19 (MLLLPLPLLLFFLCSRAEA). The propeptide at 20–21 (GE) is activation peptide. Residues 22-245 (IIGGTECKPH…YRPWINKILQ (224 aa)) form the Peptidase S1 domain. An intrachain disulfide couples cysteine 51 to cysteine 67. Histidine 66 (charge relay system) is an active-site residue. N-linked (GlcNAc...) asparagine glycans are attached at residues asparagine 80 and asparagine 103. Aspartate 110 acts as the Charge relay system in catalysis. 2 disulfides stabilise this stretch: cysteine 144–cysteine 209 and cysteine 175–cysteine 188. Serine 203 (charge relay system) is an active-site residue.

Belongs to the peptidase S1 family. Granzyme subfamily.

It localises to the secreted. It is found in the cytoplasmic granule. The enzyme catalyses Preferential cleavage: Phe-|-Xaa &gt; Tyr-|-Xaa &gt; Trp-|-Xaa &gt; Leu-|-Xaa.. Functionally, major secreted protease of mast cells with suspected roles in vasoactive peptide generation, extracellular matrix degradation, and regulation of gland secretion. This Macaca fascicularis (Crab-eating macaque) protein is Chymase (CMA1).